The chain runs to 321 residues: tRNA U34 carboxymethyltransferase (321 aa).

Carboxy-S-adenosyl-L-methionine contacts are provided by residues K90, W104, K109, G129, 151–153, 180–181, M195, Y199, and R314; these read DPT and IE.

This sequence belongs to the class I-like SAM-binding methyltransferase superfamily. CmoB family. Homotetramer.

The catalysed reaction is carboxy-S-adenosyl-L-methionine + 5-hydroxyuridine(34) in tRNA = 5-carboxymethoxyuridine(34) in tRNA + S-adenosyl-L-homocysteine + H(+). Functionally, catalyzes carboxymethyl transfer from carboxy-S-adenosyl-L-methionine (Cx-SAM) to 5-hydroxyuridine (ho5U) to form 5-carboxymethoxyuridine (cmo5U) at position 34 in tRNAs. This Haemophilus influenzae (strain 86-028NP) protein is tRNA U34 carboxymethyltransferase.